Here is a 305-residue protein sequence, read N- to C-terminus: Porphobilinogen deaminase (305 aa).

An S-(dipyrrolylmethanemethyl)cysteine modification is found at cysteine 240.

The protein belongs to the HMBS family. In terms of assembly, monomer. Dipyrromethane is required as a cofactor.

It carries out the reaction 4 porphobilinogen + H2O = hydroxymethylbilane + 4 NH4(+). It participates in porphyrin-containing compound metabolism; protoporphyrin-IX biosynthesis; coproporphyrinogen-III from 5-aminolevulinate: step 2/4. Tetrapolymerization of the monopyrrole PBG into the hydroxymethylbilane pre-uroporphyrinogen in several discrete steps. The polypeptide is Porphobilinogen deaminase (hemC) (Xylella fastidiosa (strain 9a5c)).